Here is a 333-residue protein sequence, read N- to C-terminus: L-asparagine oxygenase (333 aa).

2 residues coordinate L-asparagine: E125 and N146. Residues H155 and E157 each coordinate Fe cation. E157 and N158 together coordinate L-asparagine. H287 provides a ligand contact to Fe cation. R301 contacts 2-oxoglutarate. R305 contributes to the L-asparagine binding site.

The protein belongs to the clavaminate synthase family. It depends on Fe(2+) as a cofactor.

The enzyme catalyses L-asparagine + 2-oxoglutarate + O2 = (2S,3S)-3-hydroxyasparagine + succinate + CO2. It participates in antibiotic biosynthesis; calcium-dependent antibiotic biosynthesis. Catalyzes the 3-hydroxylation of L-asparagine to (2S,3S)-3-hydroxyasparagine. The 3-hydroxylated asparagine produced is incorporated at position 9 during the biosynthesis of the non-ribosomally synthesized calcium-dependent antibiotic (CDA), a 11-residue acidic lipopeptide lactone. Is able to hydroxylate only free L-asparagine, since it hydroxylates neither a CDA analog with unmodified Asn at position 9 nor a peptidyl-carrier-protein (PCP)-bound asparagine. Is not active toward D-asparagine. The protein is L-asparagine oxygenase (asnO) of Streptomyces coelicolor (strain ATCC BAA-471 / A3(2) / M145).